Here is a 647-residue protein sequence, read N- to C-terminus: DNA mismatch repair protein MutL (647 aa).

The segment at 375-395 (KQEEPQAVKQPPQLWQPPKQE) is disordered. A compositionally biased stretch (low complexity) spans 383–395 (KQPPQLWQPPKQE).

This sequence belongs to the DNA mismatch repair MutL/HexB family.

Functionally, this protein is involved in the repair of mismatches in DNA. It is required for dam-dependent methyl-directed DNA mismatch repair. May act as a 'molecular matchmaker', a protein that promotes the formation of a stable complex between two or more DNA-binding proteins in an ATP-dependent manner without itself being part of a final effector complex. The chain is DNA mismatch repair protein MutL from Bacillus cereus (strain B4264).